The chain runs to 77 residues: Tachyplesin-1 (77 aa).

The N-terminal stretch at 1-23 is a signal peptide; the sequence is MKKLVIALCLMMVLAVMVEEAEA. 2 cysteine pairs are disulfide-bonded: Cys-26–Cys-39 and Cys-30–Cys-35. An Arginine amide modification is found at Arg-40. Residues 41–77 constitute a propeptide that is removed on maturation; sequence GKRNEVRQYRDRGYDVRAIPEETFFTRQDEDEDDDEE.

Belongs to the tachyplesin/polyphemusin family. As to expression, hemocytes.

It localises to the secreted. Its function is as follows. Significantly inhibits the growth of Gram-negative and Gram-positive bacteria. This chain is Tachyplesin-1, found in Tachypleus tridentatus (Japanese horseshoe crab).